Consider the following 172-residue polypeptide: General stress protein 18 (172 aa).

The PfpI endopeptidase domain maps to K3–E171. C104 functions as the Nucleophile in the catalytic mechanism. Residue H105 is part of the active site.

Belongs to the peptidase C56 family.

Functionally, functions in the protection against aldehyde-stress, possibly by degrading damaged proteins. The protein is General stress protein 18 (yfkM) of Bacillus subtilis (strain 168).